A 218-amino-acid chain; its full sequence is Small ribosomal subunit protein uS3c (218 aa).

The KH type-2 domain maps to 47–118; sequence VQKHMRISSG…RLNIAIARVA (72 aa).

The protein belongs to the universal ribosomal protein uS3 family. As to quaternary structure, part of the 30S ribosomal subunit.

It is found in the plastid. It localises to the chloroplast. The protein is Small ribosomal subunit protein uS3c (rps3) of Nymphaea alba (White water-lily).